Here is a 151-residue protein sequence, read N- to C-terminus: 3-dehydroquinate dehydratase (151 aa).

Y24 (proton acceptor) is an active-site residue. Positions 76, 82, and 89 each coordinate substrate. The active-site Proton donor is H102. Substrate contacts are provided by residues 103-104 (VS) and R113.

It belongs to the type-II 3-dehydroquinase family. Homododecamer.

It carries out the reaction 3-dehydroquinate = 3-dehydroshikimate + H2O. The protein operates within metabolic intermediate biosynthesis; chorismate biosynthesis; chorismate from D-erythrose 4-phosphate and phosphoenolpyruvate: step 3/7. In terms of biological role, catalyzes a trans-dehydration via an enolate intermediate. This is 3-dehydroquinate dehydratase from Rhodopseudomonas palustris (strain HaA2).